A 208-amino-acid polypeptide reads, in one-letter code: Component of Sp100-rs (208 aa).

An HSR domain is found at 6-121; that stretch reads GSPRMSTEQE…LRRSFECGAK (116 aa).

This chain is Component of Sp100-rs (Csprs), found in Mus musculus (Mouse).